A 416-amino-acid chain; its full sequence is Formyl-CoA:oxalate CoA-transferase (416 aa).

CoA contacts are provided by residues 17-18 (QS), Arg38, 72-75 (LNTK), 96-98 (NFH), His104, and 137-140 (KAYE). The active-site Nucleophile is Asp169. Position 248 to 250 (248 to 250 (GGQ)) interacts with substrate. Residue 273–275 (QEQ) coordinates CoA.

This sequence belongs to the CoA-transferase III family. Frc subfamily. In terms of assembly, homodimer.

It carries out the reaction formyl-CoA + oxalate = oxalyl-CoA + formate. Its pathway is metabolic intermediate degradation; oxalate degradation; CO(2) and formate from oxalate: step 1/2. In terms of biological role, involved in the catabolism of oxalate and in the adapatation to low pH via the induction of the oxalate-dependent acid tolerance response (ATR). Catalyzes the transfer of the CoA moiety from formyl-CoA to oxalate. This chain is Formyl-CoA:oxalate CoA-transferase, found in Shigella sonnei (strain Ss046).